We begin with the raw amino-acid sequence, 143 residues long: Deoxyuridine 5'-triphosphate nucleotidohydrolase (143 aa).

It belongs to the dUTPase family. Requires Mg(2+) as cofactor.

The catalysed reaction is dUTP + H2O = dUMP + diphosphate + H(+). In terms of biological role, this enzyme is involved in nucleotide metabolism: it produces dUMP, the immediate precursor of thymidine nucleotides and it decreases the intracellular concentration of dUTP so that uracil cannot be incorporated into DNA. This is Deoxyuridine 5'-triphosphate nucleotidohydrolase (DUT) from Yaba monkey tumor virus (strain VR587) (YMTV).